The following is a 364-amino-acid chain: Histidinol-phosphate aminotransferase (364 aa).

N6-(pyridoxal phosphate)lysine is present on Lys226.

The protein belongs to the class-II pyridoxal-phosphate-dependent aminotransferase family. Histidinol-phosphate aminotransferase subfamily. As to quaternary structure, homodimer. The cofactor is pyridoxal 5'-phosphate.

The enzyme catalyses L-histidinol phosphate + 2-oxoglutarate = 3-(imidazol-4-yl)-2-oxopropyl phosphate + L-glutamate. Its pathway is amino-acid biosynthesis; L-histidine biosynthesis; L-histidine from 5-phospho-alpha-D-ribose 1-diphosphate: step 7/9. The polypeptide is Histidinol-phosphate aminotransferase (Campylobacter jejuni subsp. jejuni serotype O:23/36 (strain 81-176)).